Here is a 295-residue protein sequence, read N- to C-terminus: Protease HtpX (295 aa).

The next 2 helical transmembrane spans lie at 4 to 24 (ILLFLATNLAVVLIASITLSL) and 41 to 61 (SQLLVFCAVFGFAGSLFSLFI). His-147 provides a ligand contact to Zn(2+). The active site involves Glu-148. Zn(2+) is bound at residue His-151. 2 helical membrane passes run 158 to 178 (VTLALIQGVVNTFVMFFARII) and 199 to 219 (IATIFAELVLGILASAIVMWF). Residue Glu-224 coordinates Zn(2+).

This sequence belongs to the peptidase M48B family. It depends on Zn(2+) as a cofactor.

The protein resides in the cell inner membrane. This chain is Protease HtpX, found in Pseudomonas fluorescens (strain Pf0-1).